The following is a 701-amino-acid chain: Centrosomal protein of 83 kDa (701 aa).

Polar residues predominate over residues 1 to 14 (MVVSTFTDMDTFPN). Positions 1–23 (MVVSTFTDMDTFPNNFPPGGDSG) are disordered. 2 coiled-coil regions span residues 40–634 (LRCE…SLIL) and 665–698 (HMQE…ELGS). Serine 698 is modified (phosphoserine).

This sequence belongs to the CEP83 family. As to quaternary structure, interacts with CEP164 and IFT20.

It is found in the cytoplasm. The protein resides in the cytoskeleton. Its subcellular location is the microtubule organizing center. The protein localises to the centrosome. It localises to the centriole. Functionally, component of the distal appendage region of the centriole involved in the initiation of primary cilium assembly. May collaborate with IFT20 in the trafficking of ciliary membrane proteins from the Golgi complex to the cilium during the initiation of primary cilium assembly. This chain is Centrosomal protein of 83 kDa (CEP83), found in Homo sapiens (Human).